The primary structure comprises 67 residues: Small ribosomal subunit protein eS31 (67 aa).

Zn(2+) is bound by residues Cys-31, Cys-34, Cys-49, and Cys-52. Residues 31–52 (CPKCGAGVFMAEHLNRFACGKC) form a C4-type zinc finger.

Belongs to the eukaryotic ribosomal protein eS31 family. Part of the 30S ribosomal subunit. The cofactor is Zn(2+).

In Methanococcus maripaludis (strain C7 / ATCC BAA-1331), this protein is Small ribosomal subunit protein eS31.